The chain runs to 606 residues: Probable potassium transport system protein Kup 2 (606 aa).

The next 12 membrane-spanning stretches (helical) occupy residues 18-38 (GLVFGDIGTSPIYTLTVIMTL), 46-66 (VLGILSLIVWTLIILVSVEYA), 97-117 (VAFVGFLAFMGVSLLLGDGII), 140-160 (AQGVLIFIAAVIALILFIFQF), 169-189 (AFGPIMVIWFGALTLSGIVSI), 204-224 (AVTFLMHNGLAGFFILSEVIL), 247-267 (AWYFVFSALVINYLGQGAFIL), 286-306 (ILYIPFLCLTIMATIIASQAL), 339-359 (IYIGSVNWSLLVAVIFIMLIF), 368-388 (AYGLAVTGTMFITGIMMTMIF), 395-415 (WKVPIALAVTLIDLVYLTANF), and 418-438 (LPHGGYWSLILASIPLAIMII).

The protein belongs to the HAK/KUP transporter (TC 2.A.72) family.

Its subcellular location is the cell inner membrane. It carries out the reaction K(+)(in) + H(+)(in) = K(+)(out) + H(+)(out). Its function is as follows. Transport of potassium into the cell. Likely operates as a K(+):H(+) symporter. This chain is Probable potassium transport system protein Kup 2, found in Geobacter metallireducens (strain ATCC 53774 / DSM 7210 / GS-15).